The sequence spans 353 residues: Green-sensitive opsin-2 (353 aa).

The Extracellular portion of the chain corresponds to 1–47 (MAAHEPVFAARRHNEDTTRESAFVYTNANNTRDPFEGPNYHIAPRWV). Asn-29 is a glycosylation site (N-linked (GlcNAc...) asparagine). Residues 48–72 (YNVSSLWMIFVVIASVFTNGLVIVA) traverse the membrane as a helical segment. The Cytoplasmic portion of the chain corresponds to 73–84 (TAKFKKLRHPLN). Residues 85-110 (WILVNLAIADLGETVLASTISVINQI) traverse the membrane as a helical segment. The Extracellular segment spans residues 111–124 (FGYFILGHPMCVFE). Cys-121 and Cys-198 are joined by a disulfide. A helical membrane pass occupies residues 125 to 144 (GWTVSVCGITALWSLTIISW). Over 145 to 163 (ERWVVVCKPFGNVKFDGKW) the chain is Cytoplasmic. A helical transmembrane segment spans residues 164–187 (AAGGIIFSWVWAIIWCTPPIFGWS). The Extracellular portion of the chain corresponds to 188 to 213 (RYWPHGLKTSCGPDVFSGSEDPGVAS). Residues 214-241 (YMITLMLTCCILPLSIIIICYIFVWSAI) traverse the membrane as a helical segment. The Cytoplasmic segment spans residues 242 to 263 (HQVAQQQKDSESTQKAEKEVSR). The chain crosses the membrane as a helical span at residues 264-287 (MVVVMILAFIVCWGPYASFATFSA). Over 288–295 (VNPGYAWH) the chain is Extracellular. The chain crosses the membrane as a helical span at residues 296–320 (PLAAAMPAYFAKSATIYNPIIYVFM). Lys-307 is subject to N6-(retinylidene)lysine. The Cytoplasmic segment spans residues 321 to 353 (NRQFRSCIMQLFGKKVEDASEVSGSTTEVSTAS).

The protein belongs to the G-protein coupled receptor 1 family. Opsin subfamily. The color pigments are found in the cone photoreceptor cells.

Its subcellular location is the membrane. In terms of biological role, visual pigments are the light-absorbing molecules that mediate vision. They consist of an apoprotein, opsin, covalently linked to cis-retinal. This Psalidodon fasciatus (Banded astyanax) protein is Green-sensitive opsin-2 (G101).